Reading from the N-terminus, the 929-residue chain is MLFFADRSPFVRPLSGYAPVTPAAPRSTGSAAAPPPSPAVLDDRSGTEGDVTPMMAQYLAVKAAHPDCLLFYRMGDFYEMFFEDAVKAAETLDIALTKRGRHAGADIPMCGVPIHSHEGYLSRLIRAGIKVAICEQMEDPAEARRQRGYKAVVRRDVIRVVTAGTLTEDELLDARAHNYLAAVVRLRDAVGMAWVDVSTGDLVAQPLAEADIGPALARLAPGEVLMPEKLAGDPALREILAPLAGRISPLPASRFDSENARKRVEGLFGVKALDGFGGFGRAEVAAIGALIDYVELTQVGRLPRLSPPRRLSLGAILEIDGATRRNLELTETLGGGRKGSLLARIDCTVTGAGARLLAERLAAPLTDPAQIGARLDGVGFLVSAERVRGDLRDTLRGCPDIARALSRLSLGRGGPRDLAAIGEALSRIPALRVLVVGAGLGEPPTELTAALIDLGSHEGLVDLLGRALDADLPLLARDGGFIRPGYDAGLDELRALRDEGRRLIAGLQARYASETAIPALKIKHNNVLGYFIEVAAGRADKLMAAGGPFLHRQTLASQVRFTTVELSELEDKIRGAADKALALEQALFATLCAEVLGCAADIARAANGLACLDVAAALADLAARERYARPVVDNSTAFRIHKGRHPVVEAALADQAGPAFVANDCDLAPDQRLWLLTGPNMAGKSTFLRQNALIAVLAQMGSFVPAESAEIGVIDRLFSRVGAADDLARGRSTFMVEMVETAAILNQATERSLVILDEIGRGTATYDGLSIAWATVESLHDATRCRALFATHYHELTALASRLDRLSCHTLRIKEWKDQVVFLHEVGPGAADRSYGIHVAKLAGLPAAVIARAEQVLAILEKGDASSAATRLADDLPLFAAARPRAGLPTPPPGPHPLAEALNAINPDEMTPREALDALYRLKAVMKRE.

The tract at residues 22-46 (PAAPRSTGSAAAPPPSPAVLDDRSG) is disordered. Low complexity predominate over residues 23-32 (AAPRSTGSAA). 678–685 (GPNMAGKS) contributes to the ATP binding site.

It belongs to the DNA mismatch repair MutS family.

Functionally, this protein is involved in the repair of mismatches in DNA. It is possible that it carries out the mismatch recognition step. This protein has a weak ATPase activity. The polypeptide is DNA mismatch repair protein MutS (Rhodospirillum rubrum (strain ATCC 11170 / ATH 1.1.1 / DSM 467 / LMG 4362 / NCIMB 8255 / S1)).